Consider the following 218-residue polypeptide: Pyrrolidone-carboxylate peptidase (218 aa).

Residues Glu81, Cys144, and His169 contribute to the active site.

The protein belongs to the peptidase C15 family. In terms of assembly, homotetramer.

The protein resides in the cytoplasm. It catalyses the reaction Release of an N-terminal pyroglutamyl group from a polypeptide, the second amino acid generally not being Pro.. Functionally, removes 5-oxoproline from various penultimate amino acid residues except L-proline. This is Pyrrolidone-carboxylate peptidase (pcp) from Deinococcus radiodurans (strain ATCC 13939 / DSM 20539 / JCM 16871 / CCUG 27074 / LMG 4051 / NBRC 15346 / NCIMB 9279 / VKM B-1422 / R1).